A 1957-amino-acid polypeptide reads, in one-letter code: Sporulation-specific protein 15 (1957 aa).

Low complexity-rich tracts occupy residues 1–12 (MSNQSSSGSNTS) and 19–28 (ASSLVSSAAS). A disordered region spans residues 1 to 102 (MSNQSSSGSN…STASSALPLT (102 aa)). Over residues 58 to 83 (SQHEDSSEELKRQEVRGMRRHSDLSI) the composition is skewed to basic and acidic residues. The segment covering 90–102 (SEGSTASSALPLT) has biased composition (polar residues). At S105 the chain carries Phosphoserine. 4 coiled-coil regions span residues 199 to 785 (KQSE…FTSL), 804 to 1235 (VNMQ…DLLD), 1320 to 1471 (KVVA…SLDD), and 1481 to 1723 (EKLG…EQHE).

Belongs to the MPC70 family. Monomer.

It localises to the cytoplasm. The protein localises to the cytoskeleton. The protein resides in the microtubule organizing center. Its subcellular location is the spindle pole body. Functionally, has a role in the initiation of spore membrane formation. The polypeptide is Sporulation-specific protein 15 (spo15) (Schizosaccharomyces pombe (strain 972 / ATCC 24843) (Fission yeast)).